The sequence spans 161 residues: Ecotin (161 aa).

An N-terminal signal peptide occupies residues 1–23 (MGNFTVRATAGLMLASLSTLAHA). Cysteine 69 and cysteine 106 are disulfide-bonded.

The protein belongs to the protease inhibitor I11 (ecotin) family. Homodimer.

It localises to the periplasm. Functionally, general inhibitor of family S1 serine proteases. The protein is Ecotin of Pseudomonas fluorescens (strain Pf0-1).